A 177-amino-acid polypeptide reads, in one-letter code: Large ribosomal subunit protein uL6 (177 aa).

The protein belongs to the universal ribosomal protein uL6 family. As to quaternary structure, part of the 50S ribosomal subunit.

Its function is as follows. This protein binds to the 23S rRNA, and is important in its secondary structure. It is located near the subunit interface in the base of the L7/L12 stalk, and near the tRNA binding site of the peptidyltransferase center. The sequence is that of Large ribosomal subunit protein uL6 from Pseudomonas fluorescens (strain Pf0-1).